Here is a 435-residue protein sequence, read N- to C-terminus: Methionine aminopeptidase 2-2 (435 aa).

The interval 1-92 (MAAQTTEKLQ…VPVSNLFPNN (92 aa)) is disordered. Residues 24–33 (DAPAAGQAEA) are compositionally biased toward low complexity. A compositionally biased stretch (acidic residues) spans 34-45 (GEAEEDSDDEKD). Residues 59–73 (AKKKKRKSKKKKKGG) show a composition bias toward basic residues. Histidine 197 is a substrate binding site. 3 residues coordinate a divalent metal cation: aspartate 217, aspartate 228, and histidine 297. Histidine 305 contributes to the substrate binding site. A divalent metal cation-binding residues include glutamate 330 and glutamate 425.

Belongs to the peptidase M24A family. Methionine aminopeptidase eukaryotic type 2 subfamily. The cofactor is Co(2+). Requires Zn(2+) as cofactor. Mn(2+) is required as a cofactor. It depends on Fe(2+) as a cofactor.

The protein resides in the cytoplasm. The catalysed reaction is Release of N-terminal amino acids, preferentially methionine, from peptides and arylamides.. Its function is as follows. Cotranslationally removes the N-terminal methionine from nascent proteins. The N-terminal methionine is often cleaved when the second residue in the primary sequence is small and uncharged (Met-Ala-, Cys, Gly, Pro, Ser, Thr, or Val). The chain is Methionine aminopeptidase 2-2 from Aspergillus clavatus (strain ATCC 1007 / CBS 513.65 / DSM 816 / NCTC 3887 / NRRL 1 / QM 1276 / 107).